Here is a 359-residue protein sequence, read N- to C-terminus: Glyceraldehyde-3-phosphate dehydrogenase, glycosomal (359 aa).

NAD(+) is bound by residues Arg12–Ile13, Asp38, Gln91, and Ser134. Residues Ser165–Thr167, Thr197, Thr226–Gly227, and Arg249 contribute to the D-glyceraldehyde 3-phosphate site. The Nucleophile role is filled by Cys166. Residue Asn335 participates in NAD(+) binding. Positions Ala357–Leu359 match the Microbody targeting signal motif.

Belongs to the glyceraldehyde-3-phosphate dehydrogenase family. In terms of assembly, homotetramer.

The protein resides in the glycosome. The enzyme catalyses D-glyceraldehyde 3-phosphate + phosphate + NAD(+) = (2R)-3-phospho-glyceroyl phosphate + NADH + H(+). It functions in the pathway carbohydrate degradation; glycolysis; pyruvate from D-glyceraldehyde 3-phosphate: step 1/5. In Trypanosoma cruzi, this protein is Glyceraldehyde-3-phosphate dehydrogenase, glycosomal.